The chain runs to 453 residues: MISFCPVCGKSVKVSFKFCPYCGKALPVEEDGGTQSAVTPHVSSVPGSRRDLNSSFETSPKKVKCSHTVTSLPLSRHSDCDSSGSDNTLTSPDRATGTRSRPLTPKGSPLSNRQSPQTLKRTRVTTSLQALATGTELTDQNGKHWTLGALQIRDDQGILYEAEPTSAVPSESRTQKWRFSLKLDSKDGRLFNEQNFFQRVAKPLQVNKWKKQFLLPLLAIPTCIGFGIHQDKYRFLVFPSLGRSLQSALDDNPKHVVSERCVLQVACRLLDALEYLHENEYVHGNLTAENVFVNPEDLSQVTLVGYGFTYRYCPGGKHVAYKEGSRSPHDGDLEFISMDLHKGCGPSRRSDLQTLGYCMLKWLYGSLPWTNCLPNTEKITRQKQKYLDSPERLVGLCGRWNKASETLREYLKVVMALNYEEKPPYATLRNSLEALLQDMRVSPYDPLDLQMVP.

Residues 30–123 (EDGGTQSAVT…QSPQTLKRTR (94 aa)) form a disordered region. The segment covering 33–46 (GTQSAVTPHVSSVP) has biased composition (polar residues). Positions 49–64 (RRDLNSSFETSPKKVK) match the Nuclear localization signal motif. Ser-54, Ser-55, Ser-59, Ser-82, Ser-83, and Ser-108 each carry phosphoserine. Residues 81–101 (DSSGSDNTLTSPDRATGTRSR) show a composition bias toward polar residues. The span at 109-123 (PLSNRQSPQTLKRTR) shows a compositional bias: polar residues. The Protein kinase domain maps to 125–436 (TTSLQALATG…TLRNSLEALL (312 aa)).

It belongs to the protein kinase superfamily. CK1 Ser/Thr protein kinase family. VRK subfamily. In terms of assembly, interacts with DUSP3. Interacts with RAN. Interacts with HSP70/HSPA1A. Post-translationally, phosphorylated at Ser-108 by CDK5; leading to protection of the cell against H2O2-induced apoptosis. In terms of processing, ubiquitinated by RNF144A. Expressed in liver, kidney, muscle, thymus, and bone marrow. Weakly expressed in spleen.

The protein localises to the nucleus. It localises to the cytoplasm. It catalyses the reaction L-seryl-[protein] + ATP = O-phospho-L-seryl-[protein] + ADP + H(+). Functionally, plays a role in the regulation of the cell cycle by phosphorylating the nuclear envelope protein barrier-to-autointegration factor/BAF that is required for disassembly and reassembly, respectively, of the nuclear envelope during mitosis. Under normal physiological conditions, negatively regulates ERK activity along with VHR phosphatase in the nucleus, causing timely and transient action of ERK. Stress conditions activate CDK5 which phosphorylates VRK3 to increase VHR phosphatase activity and suppress prolonged ERK activation that causes cell death. For example, upon glutamate induction, promotes nuclear localization of HSP70/HSPA1A to inhibit ERK activation via VHR phosphatase. This chain is Serine/threonine-protein kinase VRK3 (Vrk3), found in Mus musculus (Mouse).